The primary structure comprises 323 residues: Mas-related G-protein coupled receptor member B4 (323 aa).

The Extracellular portion of the chain corresponds to 1–34; sequence MSPTTQAWSINNTVVKENYYTEILSCITTFNTLN. Asn11 is a glycosylation site (N-linked (GlcNAc...) asparagine). Residues 35–55 traverse the membrane as a helical segment; sequence FLIVIISVVGMAGNATVLWLL. Residues 56–63 are Cytoplasmic-facing; that stretch reads GFHMHRNA. A helical transmembrane segment spans residues 64-84; the sequence is FSVYVLNLAGADFLYLCAQTV. The Extracellular portion of the chain corresponds to 85 to 98; sequence YSLECVLQFDNSYF. The helical transmembrane segment at 99 to 119 threads the bilayer; it reads YFLLTILMFNYLAGFCMIAAI. The Cytoplasmic segment spans residues 120-147; sequence STERCLSVTWPIWYHCQRPRHTSATVCA. A helical membrane pass occupies residues 148–168; sequence LFWAFSLLLSLLLGQGCGFLF. Residues 169–180 lie on the Extracellular side of the membrane; it reads SKFDYSFCRYCN. A helical membrane pass occupies residues 181–201; it reads FIATAFLIVIFMVLFVSSLAL. Residues 202-224 lie on the Cytoplasmic side of the membrane; it reads LAKIICGSHRIPVTRFYVTIALT. Residues 225–245 form a helical membrane-spanning segment; it reads VLVFIFFGLPIGICVFLLPWI. Residues 246 to 255 are Extracellular-facing; that stretch reads HMMLSSFFYE. A helical membrane pass occupies residues 256-276; the sequence is MVTLLSCVNSCANPIIYFFVG. At 277–323 the chain is on the cytoplasmic side; sequence SIRHHRLQRQTLKLLLQRAMQDTPEEEGGERGPSQKSEDLEVVRCSS. A disordered region spans residues 298–323; that stretch reads DTPEEEGGERGPSQKSEDLEVVRCSS. Residues 312–323 are compositionally biased toward basic and acidic residues; it reads KSEDLEVVRCSS.

The protein belongs to the G-protein coupled receptor 1 family. Mas subfamily. In terms of tissue distribution, expressed strongly in newborn dorsal root ganglia, adult dorsal root ganglia and trigeminal ganlia.

The protein localises to the membrane. Its function is as follows. Orphan receptor. Probably involved in the function of nociceptive neurons. May regulate nociceptor function and/or development, including the sensation or modulation of pain. The polypeptide is Mas-related G-protein coupled receptor member B4 (Mrgprb4) (Rattus norvegicus (Rat)).